We begin with the raw amino-acid sequence, 249 residues long: Triosephosphate isomerase (249 aa).

Substrate is bound at residue 9-11 (NWK). The active-site Electrophile is the His-95. The active-site Proton acceptor is the Glu-165. Substrate-binding positions include Gly-171, Ser-211, and 232-233 (GG).

The protein belongs to the triosephosphate isomerase family. Homodimer.

Its subcellular location is the cytoplasm. It carries out the reaction D-glyceraldehyde 3-phosphate = dihydroxyacetone phosphate. It participates in carbohydrate biosynthesis; gluconeogenesis. It functions in the pathway carbohydrate degradation; glycolysis; D-glyceraldehyde 3-phosphate from glycerone phosphate: step 1/1. Involved in the gluconeogenesis. Catalyzes stereospecifically the conversion of dihydroxyacetone phosphate (DHAP) to D-glyceraldehyde-3-phosphate (G3P). The chain is Triosephosphate isomerase from Chlorobium phaeobacteroides (strain DSM 266 / SMG 266 / 2430).